Consider the following 352-residue polypeptide: UDP-3-O-acylglucosamine N-acyltransferase (352 aa).

Residue histidine 257 is the Proton acceptor of the active site.

The protein belongs to the transferase hexapeptide repeat family. LpxD subfamily. In terms of assembly, homotrimer.

It catalyses the reaction a UDP-3-O-[(3R)-3-hydroxyacyl]-alpha-D-glucosamine + a (3R)-hydroxyacyl-[ACP] = a UDP-2-N,3-O-bis[(3R)-3-hydroxyacyl]-alpha-D-glucosamine + holo-[ACP] + H(+). The protein operates within bacterial outer membrane biogenesis; LPS lipid A biosynthesis. Catalyzes the N-acylation of UDP-3-O-acylglucosamine using 3-hydroxyacyl-ACP as the acyl donor. Is involved in the biosynthesis of lipid A, a phosphorylated glycolipid that anchors the lipopolysaccharide to the outer membrane of the cell. This Methylobacterium nodulans (strain LMG 21967 / CNCM I-2342 / ORS 2060) protein is UDP-3-O-acylglucosamine N-acyltransferase.